A 203-amino-acid polypeptide reads, in one-letter code: uncharacterized protein (203 aa).

This is an uncharacterized protein from Archaeoglobus fulgidus (strain ATCC 49558 / DSM 4304 / JCM 9628 / NBRC 100126 / VC-16).